The sequence spans 202 residues: dTTP/UTP pyrophosphatase (202 aa).

The active-site Proton acceptor is the Asp-74.

It belongs to the Maf family. YhdE subfamily. A divalent metal cation is required as a cofactor.

It is found in the cytoplasm. The catalysed reaction is dTTP + H2O = dTMP + diphosphate + H(+). It catalyses the reaction UTP + H2O = UMP + diphosphate + H(+). Its function is as follows. Nucleoside triphosphate pyrophosphatase that hydrolyzes dTTP and UTP. May have a dual role in cell division arrest and in preventing the incorporation of modified nucleotides into cellular nucleic acids. The sequence is that of dTTP/UTP pyrophosphatase from Methylococcus capsulatus (strain ATCC 33009 / NCIMB 11132 / Bath).